The primary structure comprises 512 residues: Probable DNA ligase (512 aa).

An ATP-binding site is contributed by Glu208. The active-site N6-AMP-lysine intermediate is Lys210. Arg215, Arg230, Glu259, Phe299, Arg374, and Lys380 together coordinate ATP.

The protein belongs to the ATP-dependent DNA ligase family. Requires Mg(2+) as cofactor.

It catalyses the reaction ATP + (deoxyribonucleotide)n-3'-hydroxyl + 5'-phospho-(deoxyribonucleotide)m = (deoxyribonucleotide)n+m + AMP + diphosphate.. Functionally, DNA ligase that seals nicks in double-stranded DNA during DNA replication, DNA recombination and DNA repair. This Streptomyces avermitilis (strain ATCC 31267 / DSM 46492 / JCM 5070 / NBRC 14893 / NCIMB 12804 / NRRL 8165 / MA-4680) protein is Probable DNA ligase.